The chain runs to 525 residues: MAAVVLAATRLLRGSGSWGCSRLRFGPPAYRRFSSGGAYPNIPLSSPLPGVPKPVFATVDGQEKFETKVTTLDNGLRVASQNKFGQFCTVGILINSGSRYEAKYLSGIAHFLEKLAFSSTARFDSKDEILLTLEKHGGICDCQTSRDTTMYAVSADSKGLDTVVGLLADVVLQPRLTDEEVEMTRMTVQFELEDLNLRPDPEPLLTEMIHEAAYRENTVGLHRFCPTENIAKINREVLHSYLRNYYTPDRMVLAGVGVEHEHLVDCARKYLLGIQPAWGSAEAVDIDRSVAQYTGGIAKRERDMSNVSLGPTPIPELTHIMVGLESCSFLEEDFIPFAVLNMMMGGGGSFSAGGPGKGMFSRLYLNVLNRHHWMYNATSYHHSYEDTGLLCIHASADPRQVREMVEIITKEFILMSGTVDAVELERAKTQLTSMLMMNLESRPVIFEDVGRQVLATRSRKLPHELCTLIRNVKPEDVKRVASKMLRGKPAVAALGDLTDLPTYEHIQTALSSKDGRLPRTYRLFR.

The N-terminal 33 residues, 1–33, are a transit peptide targeting the mitochondrion; sequence MAAVVLAATRLLRGSGSWGCSRLRFGPPAYRRF. Lys64 carries the post-translational modification N6-succinyllysine. An N6-acetyllysine modification is found at Lys299.

This sequence belongs to the peptidase M16 family. As to quaternary structure, heterodimer of PMPCA (alpha) and PMPCB (beta) subunits, forming the mitochondrial processing protease (MPP) in which PMPCA is involved in substrate recognition and binding and PMPCB is the catalytic subunit.

It is found in the mitochondrion matrix. Its subcellular location is the mitochondrion inner membrane. Functionally, substrate recognition and binding subunit of the essential mitochondrial processing protease (MPP), which cleaves the mitochondrial sequence off newly imported precursors proteins. The polypeptide is Mitochondrial-processing peptidase subunit alpha (PMPCA) (Pongo abelii (Sumatran orangutan)).